The sequence spans 530 residues: Autoinducer-2 kinase (530 aa).

The protein belongs to the FGGY kinase family.

It localises to the cytoplasm. It catalyses the reaction (S)-4,5-dihydroxypentane-2,3-dione + ATP = (2S)-2-hydroxy-3,4-dioxopentyl phosphate + ADP + H(+). In terms of biological role, catalyzes the phosphorylation of autoinducer-2 (AI-2) to phospho-AI-2, which subsequently inactivates the transcriptional regulator LsrR and leads to the transcription of the lsr operon. Phosphorylates the ring-open form of (S)-4,5-dihydroxypentane-2,3-dione (DPD), which is the precursor to all AI-2 signaling molecules, at the C5 position. This chain is Autoinducer-2 kinase, found in Yersinia pestis bv. Antiqua (strain Antiqua).